The chain runs to 247 residues: Adenosylcobinamide-GDP ribazoletransferase (247 aa).

Transmembrane regions (helical) follow at residues 34 to 54, 59 to 79, 113 to 133, 138 to 158, 171 to 191, and 194 to 214; these read IVMF…IFIL, CGIP…TGGF, GGLA…ELAL, MLAA…LLMY, VFIG…AVIV, and VLLP…AIFI.

The protein belongs to the CobS family. It depends on Mg(2+) as a cofactor.

The protein resides in the cell inner membrane. It catalyses the reaction alpha-ribazole + adenosylcob(III)inamide-GDP = adenosylcob(III)alamin + GMP + H(+). It carries out the reaction alpha-ribazole 5'-phosphate + adenosylcob(III)inamide-GDP = adenosylcob(III)alamin 5'-phosphate + GMP + H(+). The protein operates within cofactor biosynthesis; adenosylcobalamin biosynthesis; adenosylcobalamin from cob(II)yrinate a,c-diamide: step 7/7. Functionally, joins adenosylcobinamide-GDP and alpha-ribazole to generate adenosylcobalamin (Ado-cobalamin). Also synthesizes adenosylcobalamin 5'-phosphate from adenosylcobinamide-GDP and alpha-ribazole 5'-phosphate. The sequence is that of Adenosylcobinamide-GDP ribazoletransferase from Salmonella paratyphi A (strain ATCC 9150 / SARB42).